Reading from the N-terminus, the 253-residue chain is Sulfate transporter CysZ (253 aa).

A run of 4 helical transmembrane segments spans residues 31-51 (FVIL…WWLF), 72-92 (LSYI…GYFF), 151-171 (IVLL…PVLW), and 222-242 (IPVL…AMWV).

This sequence belongs to the CysZ family.

Its subcellular location is the cell inner membrane. Functionally, high affinity, high specificity proton-dependent sulfate transporter, which mediates sulfate uptake. Provides the sulfur source for the cysteine synthesis pathway. The protein is Sulfate transporter CysZ of Escherichia fergusonii (strain ATCC 35469 / DSM 13698 / CCUG 18766 / IAM 14443 / JCM 21226 / LMG 7866 / NBRC 102419 / NCTC 12128 / CDC 0568-73).